The primary structure comprises 323 residues: tRNA dimethylallyltransferase (323 aa).

12–19 (GPTAAGKT) is an ATP binding site. 14-19 (TAAGKT) provides a ligand contact to substrate. Interaction with substrate tRNA regions lie at residues 37–40 (DSAL) and 161–165 (QRLSR).

This sequence belongs to the IPP transferase family. Monomer. The cofactor is Mg(2+).

The enzyme catalyses adenosine(37) in tRNA + dimethylallyl diphosphate = N(6)-dimethylallyladenosine(37) in tRNA + diphosphate. Its function is as follows. Catalyzes the transfer of a dimethylallyl group onto the adenine at position 37 in tRNAs that read codons beginning with uridine, leading to the formation of N6-(dimethylallyl)adenosine (i(6)A). The protein is tRNA dimethylallyltransferase of Pseudomonas fluorescens (strain Pf0-1).